Consider the following 257-residue polypeptide: Ribonuclease HIII (257 aa).

One can recognise an RNase H type-2 domain in the interval 71–257 (KKLPGCDESG…ERFIKLNFNV (187 aa)). D77, E78, and D179 together coordinate a divalent metal cation.

Belongs to the RNase HII family. RnhC subfamily. Mn(2+) is required as a cofactor. The cofactor is Mg(2+).

The protein localises to the cytoplasm. The enzyme catalyses Endonucleolytic cleavage to 5'-phosphomonoester.. In terms of biological role, endonuclease that specifically degrades the RNA of RNA-DNA hybrids. This Aquifex aeolicus (strain VF5) protein is Ribonuclease HIII (rnhC).